Consider the following 428-residue polypeptide: Histidine--tRNA ligase (428 aa).

The protein belongs to the class-II aminoacyl-tRNA synthetase family. Homodimer.

Its subcellular location is the cytoplasm. The catalysed reaction is tRNA(His) + L-histidine + ATP = L-histidyl-tRNA(His) + AMP + diphosphate + H(+). The sequence is that of Histidine--tRNA ligase (hisS) from Chlamydia muridarum (strain MoPn / Nigg).